The chain runs to 285 residues: 1,4-dihydroxy-2-naphthoyl-CoA synthase (285 aa).

Substrate contacts are provided by residues Arg45, 84 to 88, Tyr97, 129 to 133, Thr155, Ser161, Tyr258, and Lys273; these read AGGDQ and YSIGG. Position 154–156 (154–156) interacts with hydrogencarbonate; sequence QTG.

Belongs to the enoyl-CoA hydratase/isomerase family. MenB subfamily. Homohexamer. Hydrogencarbonate is required as a cofactor.

It carries out the reaction 2-succinylbenzoyl-CoA + H(+) = 1,4-dihydroxy-2-naphthoyl-CoA + H2O. It functions in the pathway quinol/quinone metabolism; 1,4-dihydroxy-2-naphthoate biosynthesis; 1,4-dihydroxy-2-naphthoate from chorismate: step 6/7. The protein operates within quinol/quinone metabolism; menaquinone biosynthesis. Converts o-succinylbenzoyl-CoA (OSB-CoA) to 1,4-dihydroxy-2-naphthoyl-CoA (DHNA-CoA). This is 1,4-dihydroxy-2-naphthoyl-CoA synthase from Salmonella typhimurium (strain LT2 / SGSC1412 / ATCC 700720).